The primary structure comprises 486 residues: mRNA cap guanine-N(7) methyltransferase (486 aa).

A disordered region spans residues 1 to 92; that stretch reads MAGGADLDEP…ADRKAARERA (92 aa). 3 stretches are compositionally biased toward basic and acidic residues: residues 9 to 28, 35 to 54, and 82 to 92; these read EPPR…DSTH, VPRD…EPAR, and EADRKAARERA. Residues 135–486 enclose the mRNA cap 0 methyltransferase domain; sequence SRIKGLRSFN…FYVGFCFYKV (352 aa). 144–145 is a binding site for mRNA; that stretch reads NN. S-adenosyl-L-methionine contacts are provided by residues Lys-148, Gly-177, Asp-201, Asp-247, 281–283, and Tyr-286; that span reads MFC. Basic and acidic residues predominate over residues 333-351; it reads VEMKKKQAEAGDGSKKDDG. The tract at residues 333–365 is disordered; that stretch reads VEMKKKQAEAGDGSKKDDGGDAEEGELDEPEVE. Acidic residues predominate over residues 352–363; it reads GDAEEGELDEPE.

This sequence belongs to the class I-like SAM-binding methyltransferase superfamily. mRNA cap 0 methyltransferase family.

The protein resides in the nucleus. It catalyses the reaction a 5'-end (5'-triphosphoguanosine)-ribonucleoside in mRNA + S-adenosyl-L-methionine = a 5'-end (N(7)-methyl 5'-triphosphoguanosine)-ribonucleoside in mRNA + S-adenosyl-L-homocysteine. Responsible for methylating the 5'-cap structure of mRNAs. The chain is mRNA cap guanine-N(7) methyltransferase (ABD1) from Pyricularia oryzae (strain 70-15 / ATCC MYA-4617 / FGSC 8958) (Rice blast fungus).